A 284-amino-acid chain; its full sequence is Bifunctional protein FolD (284 aa).

Residues 165-167, S190, and I231 each bind NADP(+); that span reads GAS.

Belongs to the tetrahydrofolate dehydrogenase/cyclohydrolase family. As to quaternary structure, homodimer.

It catalyses the reaction (6R)-5,10-methylene-5,6,7,8-tetrahydrofolate + NADP(+) = (6R)-5,10-methenyltetrahydrofolate + NADPH. It carries out the reaction (6R)-5,10-methenyltetrahydrofolate + H2O = (6R)-10-formyltetrahydrofolate + H(+). The protein operates within one-carbon metabolism; tetrahydrofolate interconversion. Functionally, catalyzes the oxidation of 5,10-methylenetetrahydrofolate to 5,10-methenyltetrahydrofolate and then the hydrolysis of 5,10-methenyltetrahydrofolate to 10-formyltetrahydrofolate. This is Bifunctional protein FolD from Bordetella avium (strain 197N).